Here is a 69-residue protein sequence, read N- to C-terminus: Putative membrane protein insertion efficiency factor (69 aa).

Belongs to the UPF0161 family.

It is found in the cell inner membrane. Its function is as follows. Could be involved in insertion of integral membrane proteins into the membrane. The protein is Putative membrane protein insertion efficiency factor of Geobacter metallireducens (strain ATCC 53774 / DSM 7210 / GS-15).